Reading from the N-terminus, the 1034-residue chain is FACT complex subunit spt-16 (1034 aa).

Composition is skewed to basic and acidic residues over residues 433 to 448, 463 to 481, and 493 to 503; these read EEQE…DQKK, TRNK…KELG, and SKQDGGTDEKK. The tract at residues 433-511 is disordered; sequence EEQENRETER…KKVKKSNVSY (79 aa). Positions 617–642 form a coiled coil; it reads LSTAFRQIKEMQKRFRTEEAEEREKD. Acidic residues-rich tracts occupy residues 926 to 950 and 959 to 983; these read AESE…EADA and SDED…DSDE. The disordered stretch occupies residues 926–1034; sequence AESEGEDAGD…KAGPSHKRRK (109 aa). Residues 984–1020 show a composition bias toward basic and acidic residues; sequence SEGKDWSDLEEEAAKADKRREVEDGGRDRDRDRDRKR. Positions 1021–1034 are enriched in basic residues; that stretch reads PSSSKAGPSHKRRK.

This sequence belongs to the peptidase M24 family. SPT16 subfamily. As to quaternary structure, component of the FACT complex, a stable heterodimer of spt-16 and hmg-3 or hmg-4.

The protein localises to the nucleus. The protein resides in the chromosome. Its function is as follows. Component of the FACT complex, a general chromatin factor that acts to reorganize nucleosomes. The FACT complex is involved in multiple processes that require DNA as a template such as mRNA elongation, DNA replication and DNA repair. During transcription elongation the FACT complex acts as a histone chaperone that both destabilizes and restores nucleosomal structure. It facilitates the passage of RNA polymerase II and transcription by promoting the dissociation of one histone H2A-H2B dimer from the nucleosome, then subsequently promotes the reestablishment of the nucleosome following the passage of RNA polymerase II. The sequence is that of FACT complex subunit spt-16 (spt-16) from Caenorhabditis briggsae.